A 227-amino-acid chain; its full sequence is Lipoprotein-releasing system ATP-binding protein LolD (227 aa).

Residues 6 to 227 (LVLDDIQKSY…RLDEGVLVSA (222 aa)) form the ABC transporter domain. Residue 43–50 (APSGAGKS) participates in ATP binding.

This sequence belongs to the ABC transporter superfamily. Lipoprotein translocase (TC 3.A.1.125) family. In terms of assembly, the complex is composed of two ATP-binding proteins (LolD) and two transmembrane proteins (LolC and LolE).

It is found in the cell inner membrane. In terms of biological role, part of the ABC transporter complex LolCDE involved in the translocation of mature outer membrane-directed lipoproteins, from the inner membrane to the periplasmic chaperone, LolA. Responsible for the formation of the LolA-lipoprotein complex in an ATP-dependent manner. The chain is Lipoprotein-releasing system ATP-binding protein LolD from Jannaschia sp. (strain CCS1).